Here is a 186-residue protein sequence, read N- to C-terminus: Casparian strip membrane protein 6 (186 aa).

Over M1–G23 the chain is Cytoplasmic. Residues V24–I44 form a helical membrane-spanning segment. Residues S45–T73 are Extracellular-facing. N50 carries N-linked (GlcNAc...) asparagine glycosylation. A helical transmembrane segment spans residues F74–I94. The Cytoplasmic portion of the chain corresponds to F95 to R106. A helical transmembrane segment spans residues I107 to A127. The Extracellular portion of the chain corresponds to A128–S160. N142 carries N-linked (GlcNAc...) asparagine glycosylation. The helical transmembrane segment at L161–A181 threads the bilayer. Over L182–K186 the chain is Cytoplasmic.

It belongs to the Casparian strip membrane proteins (CASP) family. As to quaternary structure, homodimer and heterodimers.

The protein resides in the cell membrane. Functionally, regulates membrane-cell wall junctions and localized cell wall deposition. Required for establishment of the Casparian strip membrane domain (CSD) and the subsequent formation of Casparian strips, a cell wall modification of the root endodermis that determines an apoplastic barrier between the intraorganismal apoplasm and the extraorganismal apoplasm and prevents lateral diffusion. The sequence is that of Casparian strip membrane protein 6 from Populus trichocarpa (Western balsam poplar).